Here is a 750-residue protein sequence, read N- to C-terminus: Photosystem I P700 chlorophyll a apoprotein A1 (750 aa).

Helical transmembrane passes span 70-93, 156-179, 195-219, 291-309, 346-369, 385-411, 433-455, and 531-549; these read VFSAHFGQLAIIFIWLSGMYFHGA, LYCTAIGALIFAALMLFAGWFHYH, LNHHLAGLLGLGSLSWAGHQIHVSL, TAHHHLAIAVLFLIAGHMY, WHAQLAINLAMLGSLTIIVAHHMY, LSLFTHHMWIGGFIIVGAAAHAAIFMV, AIVSHLNWVCIFLGFHSFGLYIH, and FLVHHIHAFTIHVTVLILL. [4Fe-4S] cluster contacts are provided by cysteine 573 and cysteine 582. The next 2 membrane-spanning stretches (helical) occupy residues 589 to 610 and 664 to 686; these read HVFLGLFWMYNAISVVIFHFSW and LSAYGLLFLGAHFVWAFSLMFLF. Residue histidine 675 participates in chlorophyll a' binding. Chlorophyll a is bound by residues methionine 683 and tyrosine 691. Tryptophan 692 contributes to the phylloquinone binding site. The chain crosses the membrane as a helical span at residues 724 to 744; that stretch reads AVGVAHYLLGGIVTTWAFFLA.

This sequence belongs to the PsaA/PsaB family. In terms of assembly, the PsaA/B heterodimer binds the P700 chlorophyll special pair and subsequent electron acceptors. PSI consists of a core antenna complex that captures photons, and an electron transfer chain that converts photonic excitation into a charge separation. The eukaryotic PSI reaction center is composed of at least 11 subunits. P700 is a chlorophyll a/chlorophyll a' dimer, A0 is one or more chlorophyll a, A1 is one or both phylloquinones and FX is a shared 4Fe-4S iron-sulfur center. serves as cofactor.

It localises to the plastid. The protein resides in the chloroplast thylakoid membrane. The catalysed reaction is reduced [plastocyanin] + hnu + oxidized [2Fe-2S]-[ferredoxin] = oxidized [plastocyanin] + reduced [2Fe-2S]-[ferredoxin]. PsaA and PsaB bind P700, the primary electron donor of photosystem I (PSI), as well as the electron acceptors A0, A1 and FX. PSI is a plastocyanin-ferredoxin oxidoreductase, converting photonic excitation into a charge separation, which transfers an electron from the donor P700 chlorophyll pair to the spectroscopically characterized acceptors A0, A1, FX, FA and FB in turn. Oxidized P700 is reduced on the lumenal side of the thylakoid membrane by plastocyanin. The chain is Photosystem I P700 chlorophyll a apoprotein A1 from Pinus koraiensis (Korean pine).